The sequence spans 235 residues: Large ribosomal subunit protein uL1 (235 aa).

This sequence belongs to the universal ribosomal protein uL1 family. As to quaternary structure, part of the 50S ribosomal subunit.

Binds directly to 23S rRNA. The L1 stalk is quite mobile in the ribosome, and is involved in E site tRNA release. Functionally, protein L1 is also a translational repressor protein, it controls the translation of the L11 operon by binding to its mRNA. In Prochlorococcus marinus (strain MIT 9312), this protein is Large ribosomal subunit protein uL1.